The primary structure comprises 213 residues: Large ribosomal subunit protein bL25 (213 aa).

Residues 191–207 (AEPTDAPTAPAAAPGAE) are compositionally biased toward low complexity. Residues 191-213 (AEPTDAPTAPAAAPGAEAPKDKA) form a disordered region.

Belongs to the bacterial ribosomal protein bL25 family. CTC subfamily. In terms of assembly, part of the 50S ribosomal subunit; part of the 5S rRNA/L5/L18/L25 subcomplex. Contacts the 5S rRNA. Binds to the 5S rRNA independently of L5 and L18.

Its function is as follows. This is one of the proteins that binds to the 5S RNA in the ribosome where it forms part of the central protuberance. This chain is Large ribosomal subunit protein bL25, found in Polynucleobacter asymbioticus (strain DSM 18221 / CIP 109841 / QLW-P1DMWA-1) (Polynucleobacter necessarius subsp. asymbioticus).